A 512-amino-acid polypeptide reads, in one-letter code: Probable malate:quinone oxidoreductase (512 aa).

The protein belongs to the MQO family. The cofactor is FAD.

The enzyme catalyses (S)-malate + a quinone = a quinol + oxaloacetate. It functions in the pathway carbohydrate metabolism; tricarboxylic acid cycle; oxaloacetate from (S)-malate (quinone route): step 1/1. This is Probable malate:quinone oxidoreductase from Bradyrhizobium diazoefficiens (strain JCM 10833 / BCRC 13528 / IAM 13628 / NBRC 14792 / USDA 110).